Here is a 486-residue protein sequence, read N- to C-terminus: Alliin lyase 1 (486 aa).

The first 28 residues, 1–28 (MVESYKKIGSCNKMPCLVILTCIIMSNS), serve as a signal peptide directing secretion. The propeptide occupies 29 to 38 (LVNNNNMVQA). The region spanning 51–97 (EAVANINCSEHGRAFLDGIISEGSPKCECNTCYTGPDCSEKIQGCSA) is the EGF-like; atypical domain. N-linked (GlcNAc...) asparagine glycosylation occurs at Asn-57. 3 disulfides stabilise this stretch: Cys-58/Cys-77, Cys-79/Cys-88, and Cys-82/Cys-95. A chloride-binding site is contributed by 130–138 (YFFNPVSNF). Residues Asn-184 and Asn-229 are each glycosylated (N-linked (GlcNAc...) asparagine). At Lys-289 the chain carries N6-(pyridoxal phosphate)lysine. N-linked (GlcNAc...) asparagine glycosylation occurs at Asn-366. Cys-406 and Cys-414 form a disulfide bridge.

This sequence belongs to the alliinase family. Homodimer. Pyridoxal 5'-phosphate is required as a cofactor. In terms of tissue distribution, expressed in bulb (at protein level). Expressed in shoots.

The protein resides in the vacuole. It carries out the reaction an S-alkyl-L-cysteine S-oxide = an S-alkyl sulfenate + 2-aminoprop-2-enoate. Its function is as follows. Able to cleave the C-S bond of sulfoxide derivatives of Cys to produce allicin, thus giving rise to all sulfur compounds which are responsible for most of the properties of garlic, such as the specific smell and flavor as well as the health benefits like blood lipid or blood pressure lowering. The sequence is that of Alliin lyase 1 from Allium sativum (Garlic).